A 239-amino-acid polypeptide reads, in one-letter code: Sugar fermentation stimulation protein homolog (239 aa).

This sequence belongs to the SfsA family.

The protein is Sugar fermentation stimulation protein homolog of Rhizobium meliloti (strain 1021) (Ensifer meliloti).